A 567-amino-acid chain; its full sequence is Urease subunit alpha (567 aa).

One can recognise a Urease domain in the interval 129–567 (GGVDSHIHFI…LPLAQRYFLF (439 aa)). Ni(2+) is bound by residues H134, H136, and K217. At K217 the chain carries N6-carboxylysine. A substrate-binding site is contributed by H219. The Ni(2+) site is built by H246 and H272. Catalysis depends on H320, which acts as the Proton donor. Residue D360 participates in Ni(2+) binding.

The protein belongs to the metallo-dependent hydrolases superfamily. Urease alpha subunit family. In terms of assembly, heterotrimer of UreA (gamma), UreB (beta) and UreC (alpha) subunits. Three heterotrimers associate to form the active enzyme. Ni cation serves as cofactor. Carboxylation allows a single lysine to coordinate two nickel ions.

It is found in the cytoplasm. The enzyme catalyses urea + 2 H2O + H(+) = hydrogencarbonate + 2 NH4(+). Its pathway is nitrogen metabolism; urea degradation; CO(2) and NH(3) from urea (urease route): step 1/1. The sequence is that of Urease subunit alpha from Pseudomonas putida (strain ATCC 47054 / DSM 6125 / CFBP 8728 / NCIMB 11950 / KT2440).